A 157-amino-acid polypeptide reads, in one-letter code: Deoxyuridine 5'-triphosphate nucleotidohydrolase (157 aa).

Substrate-binding positions include 76-78 (RSG), Asn-89, 93-95 (TID), and Lys-103.

The protein belongs to the dUTPase family. Mg(2+) is required as a cofactor.

The enzyme catalyses dUTP + H2O = dUMP + diphosphate + H(+). It functions in the pathway pyrimidine metabolism; dUMP biosynthesis; dUMP from dCTP (dUTP route): step 2/2. In terms of biological role, this enzyme is involved in nucleotide metabolism: it produces dUMP, the immediate precursor of thymidine nucleotides and it decreases the intracellular concentration of dUTP so that uracil cannot be incorporated into DNA. This Brucella abortus (strain 2308) protein is Deoxyuridine 5'-triphosphate nucleotidohydrolase.